The following is a 72-amino-acid chain: uncharacterized protein (72 aa).

This is an uncharacterized protein from Dictyostelium discoideum (Social amoeba).